The primary structure comprises 315 residues: Olfactory receptor 10H5 (315 aa).

Over 1–25 (MQGLNHTSVSEFILVGFSAFPHLQL) the chain is Extracellular. Asn5 carries N-linked (GlcNAc...) asparagine glycosylation. A helical membrane pass occupies residues 26 to 46 (MLFLLFLLMYLFTLLGNLLIM). Residues 47–54 (ATVWSERS) are Cytoplasmic-facing. The chain crosses the membrane as a helical span at residues 55–75 (LHMPMYLFLCALSITEILYTV). At 76-99 (AIIPRMLADLLSTQRSIAFLACAS) the chain is on the extracellular side. The cysteines at positions 97 and 189 are disulfide-linked. A helical membrane pass occupies residues 100–120 (QMFFSFSFGFTHSFLLTVMGY). Over 121–139 (DRYVAICHPLRYNVLMSLR) the chain is Cytoplasmic. The helical transmembrane segment at 140–160 (GCTCRVGCSWAGGLVMGMVVT) threads the bilayer. The Extracellular portion of the chain corresponds to 161 to 197 (SAIFHLAFCGHKEIHHFFCHVPPLLKLACGDDVLVVA). The chain crosses the membrane as a helical span at residues 198 to 218 (KGVGLVCITALLGCFLLILLS). Topologically, residues 219-238 (YAFIVAAILKIPSAEGRNKA) are cytoplasmic. Residues 239–259 (FSTCASHLTVVVVHYGFASVI) traverse the membrane as a helical segment. At 260 to 272 (YLKPKGPQSPEGD) the chain is on the extracellular side. The helical transmembrane segment at 273-293 (TLMGITYTVLTPFLSPIIFSL) threads the bilayer. The Cytoplasmic portion of the chain corresponds to 294–315 (RNKELKVAMKKTCFTKLFPQNC).

It belongs to the G-protein coupled receptor 1 family.

It is found in the cell membrane. In terms of biological role, odorant receptor. In Homo sapiens (Human), this protein is Olfactory receptor 10H5 (OR10H5).